The sequence spans 88 residues: Small ribosomal subunit protein uS15 (88 aa).

The protein belongs to the universal ribosomal protein uS15 family. As to quaternary structure, part of the 30S ribosomal subunit. Forms a bridge to the 50S subunit in the 70S ribosome, contacting the 23S rRNA.

One of the primary rRNA binding proteins, it binds directly to 16S rRNA where it helps nucleate assembly of the platform of the 30S subunit by binding and bridging several RNA helices of the 16S rRNA. Functionally, forms an intersubunit bridge (bridge B4) with the 23S rRNA of the 50S subunit in the ribosome. The sequence is that of Small ribosomal subunit protein uS15 from Caldanaerobacter subterraneus subsp. tengcongensis (strain DSM 15242 / JCM 11007 / NBRC 100824 / MB4) (Thermoanaerobacter tengcongensis).